The sequence spans 943 residues: Leucine--tRNA ligase (943 aa).

The short motif at proline 40–histidine 51 is the 'HIGH' region element. The 'KMSKS' region motif lies at lysine 717 to serine 721. Lysine 720 provides a ligand contact to ATP.

This sequence belongs to the class-I aminoacyl-tRNA synthetase family.

Its subcellular location is the cytoplasm. The enzyme catalyses tRNA(Leu) + L-leucine + ATP = L-leucyl-tRNA(Leu) + AMP + diphosphate. This is Leucine--tRNA ligase from Bacteroides fragilis (strain YCH46).